Here is a 210-residue protein sequence, read N- to C-terminus: dTTP/UTP pyrophosphatase (210 aa).

The Proton acceptor role is filled by Asp80.

It belongs to the Maf family. YhdE subfamily. Requires a divalent metal cation as cofactor.

It is found in the cytoplasm. The catalysed reaction is dTTP + H2O = dTMP + diphosphate + H(+). The enzyme catalyses UTP + H2O = UMP + diphosphate + H(+). In terms of biological role, nucleoside triphosphate pyrophosphatase that hydrolyzes dTTP and UTP. May have a dual role in cell division arrest and in preventing the incorporation of modified nucleotides into cellular nucleic acids. This chain is dTTP/UTP pyrophosphatase, found in Nitratidesulfovibrio vulgaris (strain ATCC 29579 / DSM 644 / CCUG 34227 / NCIMB 8303 / VKM B-1760 / Hildenborough) (Desulfovibrio vulgaris).